A 129-amino-acid polypeptide reads, in one-letter code: Histone H2B.1 (129 aa).

Residues 1–17 (MSAEKKPASKAPAEKKP) show a composition bias toward basic and acidic residues. The disordered stretch occupies residues 1–35 (MSAEKKPASKAPAEKKPAAKKTAPSADGKKRTKAR). Residues K5 and K6 each carry the N6-acetyllysine; alternate modification. Residues K5 and K6 each participate in a glycyl lysine isopeptide (Lys-Gly) (interchain with G-Cter in SUMO); alternate cross-link. Residue S9 is modified to Phosphoserine. Position 10 is an N6-acetyllysine (K10). Position 15 is an N6-acetyllysine; alternate (K15). A Glycyl lysine isopeptide (Lys-Gly) (interchain with G-Cter in SUMO); alternate cross-link involves residue K15. K16 is covalently cross-linked (Glycyl lysine isopeptide (Lys-Gly) (interchain with G-Cter in SUMO)). K122 participates in a covalent cross-link: Glycyl lysine isopeptide (Lys-Gly) (interchain with G-Cter in ubiquitin).

The protein belongs to the histone H2B family. As to quaternary structure, the nucleosome is a histone octamer containing two molecules each of H2A, H2B, H3 and H4 assembled in one H3-H4 heterotetramer and two H2A-H2B heterodimers. The octamer wraps approximately 147 bp of DNA. Monoubiquitinated by the UBC2-BRE1 complex to form H2BK123ub1. H2BK123ub1 gives a specific tag for epigenetic transcriptional activation and is also prerequisite for H3K4me and H3K79me formation. H2BK123ub1 also modulates the formation of double-strand breaks during meiosis and is a prerequisite for DNA-damage checkpoint activation. In terms of processing, phosphorylated by STE20 to form H2BS10ph during progression through meiotic prophase. May be correlated with chromosome condensation. Post-translationally, acetylated by GCN5 to form H2BK11ac and H2BK16ac. H2BK16ac can also be formed by ESA1. Acetylation of N-terminal lysines and particularly formation of H2BK11acK16ac has a positive effect on transcription. Sumoylation to form H2BK6su or H2BK7su, and probably also H2BK16su or H2BK17su, occurs preferentially near the telomeres and represses gene transcription.

Its subcellular location is the nucleus. The protein localises to the chromosome. Functionally, core component of nucleosome. Nucleosomes wrap and compact DNA into chromatin, limiting DNA accessibility to the cellular machineries which require DNA as a template. Histones thereby play a central role in transcription regulation, DNA repair, DNA replication and chromosomal stability. DNA accessibility is regulated via a complex set of post-translational modifications of histones, also called histone code, and nucleosome remodeling. The polypeptide is Histone H2B.1 (HTB1) (Candida glabrata (strain ATCC 2001 / BCRC 20586 / JCM 3761 / NBRC 0622 / NRRL Y-65 / CBS 138) (Yeast)).